The following is a 385-amino-acid chain: Flap endonuclease 1 (385 aa).

Residues Met1–Arg104 form an N-domain region. Asp34 serves as a coordination point for Mg(2+). Arg47 and Arg70 together coordinate DNA. Residues Asp86, Glu158, Glu160, Asp179, and Asp181 each coordinate Mg(2+). The tract at residues Gly122 to Tyr253 is I-domain. Glu158 is a DNA binding site. Gly231 and Asp233 together coordinate DNA. Asp233 serves as a coordination point for Mg(2+). The tract at residues Thr336–Phe344 is interaction with PCNA. Positions Thr346–Lys385 are disordered. A compositionally biased stretch (basic residues) spans Ala368–Lys385.

It belongs to the XPG/RAD2 endonuclease family. FEN1 subfamily. Interacts with PCNA. Three molecules of FEN1 bind to one PCNA trimer with each molecule binding to one PCNA monomer. PCNA stimulates the nuclease activity without altering cleavage specificity. Mg(2+) serves as cofactor. In terms of processing, phosphorylated. Phosphorylation upon DNA damage induces relocalization to the nuclear plasma.

The protein localises to the nucleus. The protein resides in the nucleolus. It is found in the nucleoplasm. Its subcellular location is the mitochondrion. Functionally, structure-specific nuclease with 5'-flap endonuclease and 5'-3' exonuclease activities involved in DNA replication and repair. During DNA replication, cleaves the 5'-overhanging flap structure that is generated by displacement synthesis when DNA polymerase encounters the 5'-end of a downstream Okazaki fragment. It enters the flap from the 5'-end and then tracks to cleave the flap base, leaving a nick for ligation. Also involved in the long patch base excision repair (LP-BER) pathway, by cleaving within the apurinic/apyrimidinic (AP) site-terminated flap. Acts as a genome stabilization factor that prevents flaps from equilibrating into structures that lead to duplications and deletions. Also possesses 5'-3' exonuclease activity on nicked or gapped double-stranded DNA, and exhibits RNase H activity. Also involved in replication and repair of rDNA and in repairing mitochondrial DNA. The polypeptide is Flap endonuclease 1 (Drosophila melanogaster (Fruit fly)).